The primary structure comprises 214 residues: Dephospho-CoA kinase (214 aa).

One can recognise a DPCK domain in the interval 3-202; sequence KIGLTGGIGS…DRWLALAGAA (200 aa). Position 11–16 (11–16) interacts with ATP; that stretch reads GSGKSR.

This sequence belongs to the CoaE family.

It is found in the cytoplasm. The enzyme catalyses 3'-dephospho-CoA + ATP = ADP + CoA + H(+). It functions in the pathway cofactor biosynthesis; coenzyme A biosynthesis; CoA from (R)-pantothenate: step 5/5. Functionally, catalyzes the phosphorylation of the 3'-hydroxyl group of dephosphocoenzyme A to form coenzyme A. This Bordetella bronchiseptica (strain ATCC BAA-588 / NCTC 13252 / RB50) (Alcaligenes bronchisepticus) protein is Dephospho-CoA kinase.